The primary structure comprises 405 residues: Type II secretion system protein F (405 aa).

The Cytoplasmic portion of the chain corresponds to 1–169 (MPLYRYKALD…SRALKGKVIN (169 aa)). Ca(2+) contacts are provided by D98, Q151, and D155. A helical membrane pass occupies residues 170–190 (ALIYPAILLAVVGCALLFLLG). Topologically, residues 191–218 (YVVPQFAQMYESLDVALPWFTQAVLSVG) are periplasmic. Residues 219–239 (LLVRDWWLVLVVIPGVLGLWL) traverse the membrane as a helical segment. At 240–370 (DRKRRNAAFR…LETAQAIDRA (131 aa)) the chain is on the cytoplasmic side. The chain crosses the membrane as a helical span at residues 371–391 (LAALVPLITLVLASVVGLVII). At 392–405 (SVLVPLYDLTNAIG) the chain is on the periplasmic side.

Belongs to the GSP F family. Type II secretion system is composed of four main components: the outer membrane complex, the inner membrane complex, the cytoplasmic secretion ATPase and the periplasm-spanning pseudopilus. Homodimer. Interacts with XpsE and XpsL components.

The protein localises to the cell inner membrane. Its function is as follows. Component of the type II secretion system inner membrane complex required for the energy-dependent secretion of extracellular factors such as proteases and toxins from the periplasm. This is Type II secretion system protein F (xpsF) from Xanthomonas campestris pv. campestris (strain ATCC 33913 / DSM 3586 / NCPPB 528 / LMG 568 / P 25).